The primary structure comprises 810 residues: Phenylalanine--tRNA ligase beta subunit (810 aa).

The tRNA-binding domain occupies 39–151 (RTWAAGVVVG…AGLQAGQPVG (113 aa)). Positions 408–494 (EPEHSITLRL…RLYGYDNFGE (87 aa)) constitute a B5 domain. The Mg(2+) site is built by Asp-472, Asp-478, Glu-481, and Glu-482. The region spanning 716–809 (SSFPASDRDL…LVERFRVTLR (94 aa)) is the FDX-ACB domain.

It belongs to the phenylalanyl-tRNA synthetase beta subunit family. Type 1 subfamily. Tetramer of two alpha and two beta subunits. Mg(2+) serves as cofactor.

It is found in the cytoplasm. The catalysed reaction is tRNA(Phe) + L-phenylalanine + ATP = L-phenylalanyl-tRNA(Phe) + AMP + diphosphate + H(+). The sequence is that of Phenylalanine--tRNA ligase beta subunit (pheT) from Synechococcus elongatus (strain ATCC 33912 / PCC 7942 / FACHB-805) (Anacystis nidulans R2).